The sequence spans 118 residues: Putative pterin-4-alpha-carbinolamine dehydratase (118 aa).

This sequence belongs to the pterin-4-alpha-carbinolamine dehydratase family.

The catalysed reaction is (4aS,6R)-4a-hydroxy-L-erythro-5,6,7,8-tetrahydrobiopterin = (6R)-L-erythro-6,7-dihydrobiopterin + H2O. This chain is Putative pterin-4-alpha-carbinolamine dehydratase, found in Pseudomonas putida (strain GB-1).